The sequence spans 35 residues: Putative gene 58 protein (35 aa).

The polypeptide is Putative gene 58 protein (58) (Bacillus phage SP01 (Bacteriophage SP01)).